Reading from the N-terminus, the 314-residue chain is tRNA dimethylallyltransferase (314 aa).

Residue 13 to 20 coordinates ATP; that stretch reads GPTAVGKT. 15 to 20 is a substrate binding site; sequence TAVGKT. An interaction with substrate tRNA region spans residues 38–41; that stretch reads DSMQ.

It belongs to the IPP transferase family. Monomer. It depends on Mg(2+) as a cofactor.

It carries out the reaction adenosine(37) in tRNA + dimethylallyl diphosphate = N(6)-dimethylallyladenosine(37) in tRNA + diphosphate. In terms of biological role, catalyzes the transfer of a dimethylallyl group onto the adenine at position 37 in tRNAs that read codons beginning with uridine, leading to the formation of N6-(dimethylallyl)adenosine (i(6)A). This is tRNA dimethylallyltransferase from Bacillus velezensis (strain DSM 23117 / BGSC 10A6 / LMG 26770 / FZB42) (Bacillus amyloliquefaciens subsp. plantarum).